A 275-amino-acid polypeptide reads, in one-letter code: Rhamnulose-1-phosphate aldolase (275 aa).

Glu117 is a catalytic residue. Zn(2+) is bound by residues His141, His143, and His212.

The protein belongs to the aldolase class II family. RhaD subfamily. In terms of assembly, homotetramer. It depends on Zn(2+) as a cofactor.

Its subcellular location is the cytoplasm. It carries out the reaction L-rhamnulose 1-phosphate = (S)-lactaldehyde + dihydroxyacetone phosphate. The protein operates within carbohydrate degradation; L-rhamnose degradation; glycerone phosphate from L-rhamnose: step 3/3. In terms of biological role, catalyzes the reversible cleavage of L-rhamnulose-1-phosphate to dihydroxyacetone phosphate (DHAP) and L-lactaldehyde. In Citrobacter koseri (strain ATCC BAA-895 / CDC 4225-83 / SGSC4696), this protein is Rhamnulose-1-phosphate aldolase.